The primary structure comprises 523 residues: Probable endopeptidase p60 (523 aa).

A signal peptide spans 1–27; the sequence is MNMKKATIAATAGIAVTAFAAPTIASA. The LysM 1 domain occupies 28–71; the sequence is STVVVEAGDTLWGIAQDNGTTVDALKKANKLTTDKIVPGQKLQV. The 65-residue stretch at 78 to 142 folds into the SH3b domain; the sequence is KTEKSVSATW…VNGKYLGNAV (65 aa). Residues 146 to 188 form a disordered region; that stretch reads PSATPEVKQEETTQAAPAQQTKTEVKQATPAATTEKDAVETKT. The span at 157-167 shows a compositional bias: low complexity; the sequence is TTQAAPAQQTK. Residues 198–241 form the LysM 2 domain; sequence TTHTVKSGDTIWALSVKYGASVQDLMSWNNLSSSSIYVGQNIAV. Low complexity-rich tracts occupy residues 251 to 282 and 290 to 318; these read PKAE…TTTT and EKQT…TNAS. Disordered regions lie at residues 251-323 and 367-408; these read PKAE…YTVK and ATNT…SSSA. A LysM 3 domain is found at 318-361; it reads SSYTVKSGDTLGKIASTFGTTVSKIKALNGLTSDNLQVGDVLKV. Residues 405–523 enclose the NlpC/P60 domain; sequence SSSASAIIAE…GQYLVGFGRV (119 aa). Cysteine 435 (nucleophile) is an active-site residue. The active-site Proton acceptor is the histidine 485. Asparagine 497 is an active-site residue.

It belongs to the peptidase C40 family.

Functionally, this major extracellular protein may be involved in the invasion of non-professional phagocytic cells by Listeria. The protein is Probable endopeptidase p60 (iap) of Listeria seeligeri.